Consider the following 127-residue polypeptide: Glycine cleavage system H protein (127 aa).

One can recognise a Lipoyl-binding domain in the interval 24-106 (TATLGISAFA…YGEGWLVKVQ (83 aa)). Lysine 65 carries the post-translational modification N6-lipoyllysine.

It belongs to the GcvH family. In terms of assembly, the glycine cleavage system is composed of four proteins: P, T, L and H. The cofactor is (R)-lipoate.

The glycine cleavage system catalyzes the degradation of glycine. The H protein shuttles the methylamine group of glycine from the P protein to the T protein. This Thermosynechococcus vestitus (strain NIES-2133 / IAM M-273 / BP-1) protein is Glycine cleavage system H protein.